Reading from the N-terminus, the 3907-residue chain is A-kinase anchor protein 9 (3907 aa).

Over residues 1–14 (MEDEERQKKLEAGK) the composition is skewed to basic and acidic residues. The disordered stretch occupies residues 1-57 (MEDEERQKKLEAGKAKLAQFRQRKAQSDGQSPSKKQKKKRKTSSSKHDVSAHHDLNI). The span at 34 to 44 (KKQKKKRKTSS) shows a compositional bias: basic residues. Residues 45–56 (SKHDVSAHHDLN) show a composition bias toward basic and acidic residues. Coiled-coil stretches lie at residues 152-902 (DSPT…ELHL), 932-1010 (EVVE…ENVQ), 1088-1173 (QPSE…QTMK), 1241-1268 (ELQDYRYEVQDFQENMHTLLNKVTEEYN), 1324-1380 (KLSS…ESTV), 1422-1447 (VKEETNIVKLLEKQYQEQLEEEVAKV), and 1573-1647 (SMDA…DNEN). At serine 153 the chain carries Phosphoserine. Serine 1327 is modified (phosphoserine). Low complexity predominate over residues 1682–1692 (STQTQNGNENQ). Residues 1682 to 1713 (STQTQNGNENQGEVEEQTFKEKELDRKPEDVP) form a disordered region. Residues 1698–1711 (QTFKEKELDRKPED) are compositionally biased toward basic and acidic residues. At serine 1765 the chain carries Phosphoserine. Coiled coils occupy residues 1845–2443 (NISS…VEKI), 2532–2549 (ETEMLQKKIVNLQKIVEE), 2591–2764 (QLRE…SKKA), 3061–3088 (LNCLEQRIQEQGVEYQAAMECLQKADRR), 3120–3466 (ELLE…NLNE), and 3583–3685 (SLTE…NDSL). The tract at residues 2542 to 2555 (NLQKIVEEKVAAAL) is PKA-RII subunit binding domain. The disordered stretch occupies residues 3377-3405 (RQQMEKDRQVHRKTLQTEQEANTEGQKKM). Phosphoserine occurs at positions 3690, 3842, 3865, and 3897.

Interacts with the regulatory region of protein kinase N (PKN), protein phosphatase 2A (PP2A), protein phosphatase 1 (PP1) and the immature non-phosphorylated form of PKC epsilon. Interacts with CIP4 and FNBP1. Interacts with chloride intracellular channel proteins CLIC1, CLIC4 and CLIC5. CSNK1D binding promotes its centrosomal subcellular location. Interacts with GM130/GOLGA2; leading to recruitment to the Golgi apparatus. Interacts with KCNQ1; targets protein kinase A (PKA) catalytic and regulatory subunits and protein phosphatase 1 (PP1), to the heterodimer KCNQ1-KCNE1. Interacts with PDE4DIP isoform 13/MMG8/SMYLE; this interaction stabilizes both proteins. In complex with PDE4DIP isoform 13, recruits CAMSAP2 to the Golgi apparatus. Forms a pericentrosomal complex with CDK5RAP2, EB1/MAPRE1 and PDE4DIP isoform 13; within this complex, MAPRE1 binding to CDK5RAP2 may be mediated by PDE4DIP. Interacts with MAPRE1 and MAPRE3. Interacts (via C-terminus) with CAMSAP2; this interaction is much stronger in the presence of PDE4DIP isoform 13/MMG8/SMYLE. Interacts with CAMSAP3. Interacts (via C-terminus) with the gamma-tubulin ring complex (gamma-TuRC), composed of gamma-tubulin, TUBGCP2, TUBGCP3, TUBGCP4, TUBGCP5 and TUBGCP6. As to expression, widely expressed. Isoform 4: Highly expressed in skeletal muscle and in pancreas.

It localises to the golgi apparatus. The protein localises to the cytoplasm. Its subcellular location is the cytoskeleton. The protein resides in the microtubule organizing center. It is found in the centrosome. Its function is as follows. Scaffolding protein that assembles several protein kinases and phosphatases on the centrosome and Golgi apparatus. Required to maintain the integrity of the Golgi apparatus. Required for microtubule nucleation at the cis-side of the Golgi apparatus. Required for association of the centrosomes with the poles of the bipolar mitotic spindle during metaphase. In complex with PDE4DIP isoform 13/MMG8/SMYLE, recruits CAMSAP2 to the Golgi apparatus and tethers non-centrosomal minus-end microtubules to the Golgi, an important step for polarized cell movement. In complex with PDE4DIP isoform 13/MMG8/SMYLE, EB1/MAPRE1 and CDK5RAP2, contributes to microtubules nucleation and extension also from the centrosome to the cell periphery. Functionally, associated with the N-methyl-D-aspartate receptor and is specifically found in the neuromuscular junction (NMJ) as well as in neuronal synapses, suggesting a role in the organization of postsynaptic specializations. In Homo sapiens (Human), this protein is A-kinase anchor protein 9 (AKAP9).